Here is a 210-residue protein sequence, read N- to C-terminus: Imidazoleglycerol-phosphate dehydratase (210 aa).

This sequence belongs to the imidazoleglycerol-phosphate dehydratase family.

The protein resides in the cytoplasm. It carries out the reaction D-erythro-1-(imidazol-4-yl)glycerol 3-phosphate = 3-(imidazol-4-yl)-2-oxopropyl phosphate + H2O. It functions in the pathway amino-acid biosynthesis; L-histidine biosynthesis; L-histidine from 5-phospho-alpha-D-ribose 1-diphosphate: step 6/9. In Mycobacterium leprae (strain Br4923), this protein is Imidazoleglycerol-phosphate dehydratase.